Consider the following 305-residue polypeptide: Homoserine kinase (305 aa).

90 to 100 contributes to the ATP binding site; it reads PLARGLGSSAS.

Belongs to the GHMP kinase family. Homoserine kinase subfamily.

The protein localises to the cytoplasm. The enzyme catalyses L-homoserine + ATP = O-phospho-L-homoserine + ADP + H(+). It participates in amino-acid biosynthesis; L-threonine biosynthesis; L-threonine from L-aspartate: step 4/5. Its function is as follows. Catalyzes the ATP-dependent phosphorylation of L-homoserine to L-homoserine phosphate. This chain is Homoserine kinase, found in Staphylococcus haemolyticus (strain JCSC1435).